Here is a 310-residue protein sequence, read N- to C-terminus: p-hydroxybenzoic acid efflux pump subunit AaeA (310 aa).

The helical transmembrane segment at 12–32 (AITVVLVILAFIAIFNAWVYY) threads the bilayer.

The protein belongs to the membrane fusion protein (MFP) (TC 8.A.1) family.

The protein localises to the cell inner membrane. Its function is as follows. Forms an efflux pump with AaeB. In Escherichia coli O139:H28 (strain E24377A / ETEC), this protein is p-hydroxybenzoic acid efflux pump subunit AaeA.